Reading from the N-terminus, the 382-residue chain is Alanine racemase 1 (382 aa).

Catalysis depends on K39, which acts as the Proton acceptor; specific for D-alanine. K39 bears the N6-(pyridoxal phosphate)lysine mark. R138 lines the substrate pocket. The active-site Proton acceptor; specific for L-alanine is the Y265. M312 contributes to the substrate binding site.

It belongs to the alanine racemase family. Pyridoxal 5'-phosphate is required as a cofactor.

It catalyses the reaction L-alanine = D-alanine. Its pathway is amino-acid biosynthesis; D-alanine biosynthesis; D-alanine from L-alanine: step 1/1. Functionally, catalyzes the interconversion of L-alanine and D-alanine. May also act on other amino acids. The protein is Alanine racemase 1 (alr1) of Staphylococcus aureus (strain N315).